Consider the following 419-residue polypeptide: MMFNNENYKDYDQELWEAIQAEEDRQEHNIELIASENMVSKAVMQAQGSVLTNKYAEGYPSKRYYGGTEYVDIVESLAIERAKKLFGAAYANVQPHSGSQANAAAYMALINAGDTVLGMDLAAGGHLTHGSPVNFSGKTYQFVGYTVDKETEKLDYAAILKQAKAVQPKLIVAGASAYSRQIDFEQFRFIADQVGSYLMVDMAHIAGLVAAGLHQNPVPYAHIVTSTTHKTLRGPRGGLLLTNDEAISRKMNAAIFPGLQGGPLEHVIAAKAVAFKEALDPAFTDYARAVIANTAAMAEVFAKDDRFRLISGGTDNHLFLVDVTKVIENGKLAQALLDEVNITLNKNAIPFETLSPFKTSGIRIGCAAITSRGMGVDESRTIAHLIIKALVNHQQPEILEEVRYEVRRLTDAFPLYKKN.

Residues Leu-121 and 125-127 (GHL) contribute to the (6S)-5,6,7,8-tetrahydrofolate site. At Lys-230 the chain carries N6-(pyridoxal phosphate)lysine. Residue 355–357 (SPF) participates in (6S)-5,6,7,8-tetrahydrofolate binding.

Belongs to the SHMT family. In terms of assembly, homodimer. Pyridoxal 5'-phosphate is required as a cofactor.

The protein localises to the cytoplasm. The enzyme catalyses (6R)-5,10-methylene-5,6,7,8-tetrahydrofolate + glycine + H2O = (6S)-5,6,7,8-tetrahydrofolate + L-serine. The protein operates within one-carbon metabolism; tetrahydrofolate interconversion. It functions in the pathway amino-acid biosynthesis; glycine biosynthesis; glycine from L-serine: step 1/1. Its function is as follows. Catalyzes the reversible interconversion of serine and glycine with tetrahydrofolate (THF) serving as the one-carbon carrier. This reaction serves as the major source of one-carbon groups required for the biosynthesis of purines, thymidylate, methionine, and other important biomolecules. Also exhibits THF-independent aldolase activity toward beta-hydroxyamino acids, producing glycine and aldehydes, via a retro-aldol mechanism. The protein is Serine hydroxymethyltransferase of Streptococcus equi subsp. equi (strain 4047).